The following is a 238-amino-acid chain: IkB-like protein (238 aa).

ANK repeat units follow at residues 48–80, 87–118, 124–153, and 158–187; these read GSSVFMWICIYGRIDFLKFLFKQESYPGEIINH, GNSALHYLAEKKNHLILEEVLGYFGKNGTRIC, GMTPVMKAAMRGRTLNMLSLIKFGADPTQK, and GFTAWDWAVFTGNMELVKSLNHDYQKPLYM. Positions 80–86 match the Nuclear localization signal motif; that stretch reads HHRRDND. Positions 202-213 match the Nuclear localization signal motif; it reads KKKPKIIITGCK. The PxIxITxC motif; Interaction with host PPP3CA motif lies at 205 to 212; the sequence is PKIIITGC. Positions 227–230 match the FLCV motif motif; sequence FLCV.

The protein belongs to the asfivirus A238L family. As to quaternary structure, interacts with host PPIA. Interacts with host PPP3CA/Calcineurin. Interacts with host RELA/p65; interaction of the 32 kDa form with host RELA results in the formation of a stable complex with NF-kappa-B. Interacts with host PPP3R1. Interacts with host EP300; this interaction inhibits the association of host EP300 with host RELA, JUN and NFATC2. Post-translationally, the protein exists in a 28 kDa and a 32 kDa form, probably due to post-translational modifications which are neither phosphorylation, nor sumoylation.

It is found in the host nucleus. The protein resides in the host cytoplasm. In terms of biological role, ikB-like protein that inhibits the binding of NF-kappa-B to DNA, thereby downregulating pro-inflammatory cytokine production. Forms a heterodimer with the NF-kappa-B subunit RELA/p65 and prevents the activation of the NF-kappa-B transcription factor. Inhibits calcineurin function, which is required for the induction of nuclear factor of activated T cells (NFAT)-dependent immune response genes. Prevents the binding of substrates to calcineurin without affecting the phosphatase activity. Does not contain the serine residues that are phosphorylated by host IkB kinase and thus is not degraded following stimulation of the NFkB pathway. The sequence is that of IkB-like protein (A238L) from Ornithodoros (relapsing fever ticks).